A 399-amino-acid polypeptide reads, in one-letter code: S-adenosylmethionine synthase (399 aa).

H17 contributes to the ATP binding site. Position 19 (D19) interacts with Mg(2+). K(+) is bound at residue E52. Residues E65 and Q109 each coordinate L-methionine. The interval 109-119 is flexible loop; the sequence is QSADIAQGVDA. Residues 177-179, 243-244, D252, 258-259, A275, and K279 each bind ATP; these read DSK, KF, and RK. D252 is a binding site for L-methionine. Position 283 (K283) interacts with L-methionine.

Belongs to the AdoMet synthase family. Homotetramer; dimer of dimers. Mg(2+) serves as cofactor. It depends on K(+) as a cofactor.

The protein localises to the cytoplasm. It carries out the reaction L-methionine + ATP + H2O = S-adenosyl-L-methionine + phosphate + diphosphate. It participates in amino-acid biosynthesis; S-adenosyl-L-methionine biosynthesis; S-adenosyl-L-methionine from L-methionine: step 1/1. Its function is as follows. Catalyzes the formation of S-adenosylmethionine (AdoMet) from methionine and ATP. The overall synthetic reaction is composed of two sequential steps, AdoMet formation and the subsequent tripolyphosphate hydrolysis which occurs prior to release of AdoMet from the enzyme. This Bradyrhizobium sp. (strain BTAi1 / ATCC BAA-1182) protein is S-adenosylmethionine synthase.